Here is a 1165-residue protein sequence, read N- to C-terminus: Protein hsr-9 (1165 aa).

4 disordered regions span residues 1–26 (MASSSNTMEFEEDDSTVTQTSLPTTT), 70–578 (AEDE…TEME), 608–713 (KYSM…IPLK), and 874–913 (TRARKPTTVSNQAKPKGRKKKGVDLVSSRGGSASPAEEEE). Over residues 16-26 (TVTQTSLPTTT) the composition is skewed to low complexity. Basic and acidic residues-rich tracts occupy residues 98-114 (KDAKSGESMNDSEKSES), 123-140 (TFEKKIISMDTSDDKLDI), and 149-162 (DTEKPEENEEKVVG). 3 stretches are compositionally biased toward acidic residues: residues 163–179 (DEDEEDIDDVQEDDEDE), 211–230 (EKEEPENEDDTEEPENEVEV), and 280–289 (GESEANEENQ). The segment covering 306-317 (ATVSSTPSSNTP) has biased composition (polar residues). A compositionally biased stretch (basic and acidic residues) spans 397–408 (NTEHPTEEETPK). Low complexity predominate over residues 415-431 (SAASSSATSSAVPTPRS). Over residues 446-461 (LQEKETEDPTKTHDTN) the composition is skewed to basic and acidic residues. Residues 533 to 543 (DPIEEADETIE) are compositionally biased toward acidic residues. The span at 554–563 (AAKSAPSSSK) shows a compositional bias: low complexity. Basic and acidic residues-rich tracts occupy residues 662–671 (KKEEEHHEND) and 694–708 (SEASDIKTPPAKKEP). The BRCT domain occupies 923 to 1028 (IGKNIFTGKV…KCVDYTDYVL (106 aa)).

In terms of tissue distribution, expressed in germ cells.

The protein resides in the nucleus. In terms of biological role, may have a role in DNA double-strand break repair following gamma-irradiation. The sequence is that of Protein hsr-9 from Caenorhabditis elegans.